The chain runs to 390 residues: GTPase Obg (390 aa).

An Obg domain is found at Met1–Leu159. The interval Asn127–Gly147 is disordered. Residues Arg129–Met143 show a composition bias toward polar residues. The OBG-type G domain occupies Ala160–Ile333. Residues Gly166 to Ser173, Phe191 to Val195, Asp213 to Gly216, Asn283 to Asp286, and Ser314 to Ala316 each bind GTP. Mg(2+)-binding residues include Ser173 and Thr193.

Belongs to the TRAFAC class OBG-HflX-like GTPase superfamily. OBG GTPase family. As to quaternary structure, monomer. Requires Mg(2+) as cofactor.

It localises to the cytoplasm. Its function is as follows. An essential GTPase which binds GTP, GDP and possibly (p)ppGpp with moderate affinity, with high nucleotide exchange rates and a fairly low GTP hydrolysis rate. Plays a role in control of the cell cycle, stress response, ribosome biogenesis and in those bacteria that undergo differentiation, in morphogenesis control. This is GTPase Obg from Citrobacter koseri (strain ATCC BAA-895 / CDC 4225-83 / SGSC4696).